The following is a 495-amino-acid chain: Glycerol kinase (495 aa).

Thr13 contributes to the ADP binding site. Thr13, Thr14, and Ser15 together coordinate ATP. Thr13 provides a ligand contact to sn-glycerol 3-phosphate. Arg17 contacts ADP. Positions 83, 84, 135, and 244 each coordinate sn-glycerol 3-phosphate. Glycerol contacts are provided by Arg83, Glu84, Tyr135, Asp244, and Gln245. ADP is bound by residues Thr266 and Gly309. ATP contacts are provided by Thr266, Gly309, Gln313, and Gly410. ADP is bound by residues Gly410 and Asn414.

The protein belongs to the FGGY kinase family.

It catalyses the reaction glycerol + ATP = sn-glycerol 3-phosphate + ADP + H(+). Its pathway is polyol metabolism; glycerol degradation via glycerol kinase pathway; sn-glycerol 3-phosphate from glycerol: step 1/1. Inhibited by fructose 1,6-bisphosphate (FBP). In terms of biological role, key enzyme in the regulation of glycerol uptake and metabolism. Catalyzes the phosphorylation of glycerol to yield sn-glycerol 3-phosphate. The chain is Glycerol kinase from Shewanella woodyi (strain ATCC 51908 / MS32).